The primary structure comprises 153 residues: MTKSELKVKRIKNGTVIDHITANRSLNILNMLKLPDDETAIMVAINVESSDMGRKDIIKIEGRELSQDEVDKLVLLAPQATLNIIRDYQNIRKSHLHLMDEITDVVTCSNPNCITNSNEPIQKRFAVQNKQPITLRCYYCERTMEYDDIESQF.

Zn(2+)-binding residues include cysteine 108, cysteine 113, cysteine 137, and cysteine 140.

It belongs to the PyrI family. As to quaternary structure, contains catalytic and regulatory chains. It depends on Zn(2+) as a cofactor.

Involved in allosteric regulation of aspartate carbamoyltransferase. The sequence is that of Aspartate carbamoyltransferase regulatory chain from Methanosphaera stadtmanae (strain ATCC 43021 / DSM 3091 / JCM 11832 / MCB-3).